The sequence spans 141 residues: Hemoglobin subunit alpha-3 (141 aa).

The 141-residue stretch at 1-141 (VLSPADKTNV…VSTVLTSKYR (141 aa)) folds into the Globin domain. Position 58 (H58) interacts with O2. H87 contacts heme b.

The protein belongs to the globin family. In terms of assembly, heterotetramer of two alpha chains and two beta chains. In terms of tissue distribution, red blood cells.

Involved in oxygen transport from the lung to the various peripheral tissues. This is Hemoglobin subunit alpha-3 from Gorilla gorilla gorilla (Western lowland gorilla).